The primary structure comprises 144 residues: Universal stress protein F (144 aa).

Belongs to the universal stress protein A family. Homodimer.

In Escherichia coli (strain K12), this protein is Universal stress protein F (uspF).